The chain runs to 74 residues: uncharacterized protein (74 aa).

The N-terminal stretch at 1 to 19 (MNPGFDAVDQETAAAQAVA) is a signal peptide.

This is an uncharacterized protein from Mycobacterium tuberculosis (strain ATCC 25618 / H37Rv).